We begin with the raw amino-acid sequence, 268 residues long: Undecaprenyl-diphosphatase (268 aa).

Transmembrane regions (helical) follow at residues 39-59 (SETFNIFIQLGAVLAVCLIYK), 75-95 (LPYFLKLSVAFIITSILGLWV), 106-126 (LGPVIIAIFGGAFWIYFTEKV), 179-199 (TEFAFLLGIPTMFAASLFAWI), 214-234 (LTLATGFCVSAVVAFISVKWL), and 243-263 (FIPFVWYRVGLGFFLIALVAL).

Belongs to the UppP family.

It localises to the cell inner membrane. It catalyses the reaction di-trans,octa-cis-undecaprenyl diphosphate + H2O = di-trans,octa-cis-undecaprenyl phosphate + phosphate + H(+). In terms of biological role, catalyzes the dephosphorylation of undecaprenyl diphosphate (UPP). Confers resistance to bacitracin. The chain is Undecaprenyl-diphosphatase from Methylacidiphilum infernorum (isolate V4) (Methylokorus infernorum (strain V4)).